A 426-amino-acid polypeptide reads, in one-letter code: UDP-N-acetylglucosamine 1-carboxyvinyltransferase (426 aa).

23-24 (KN) lines the phosphoenolpyruvate pocket. R99 contributes to the UDP-N-acetyl-alpha-D-glucosamine binding site. The active-site Proton donor is the D123. Residues D311 and I333 each coordinate UDP-N-acetyl-alpha-D-glucosamine.

Belongs to the EPSP synthase family. MurA subfamily.

Its subcellular location is the cytoplasm. It catalyses the reaction phosphoenolpyruvate + UDP-N-acetyl-alpha-D-glucosamine = UDP-N-acetyl-3-O-(1-carboxyvinyl)-alpha-D-glucosamine + phosphate. The protein operates within cell wall biogenesis; peptidoglycan biosynthesis. In terms of biological role, cell wall formation. Adds enolpyruvyl to UDP-N-acetylglucosamine. The chain is UDP-N-acetylglucosamine 1-carboxyvinyltransferase from Nocardia farcinica (strain IFM 10152).